Consider the following 736-residue polypeptide: DNA topoisomerase 1 (736 aa).

One can recognise a Toprim domain in the interval 2-113 (KHLIIVESPA…SYPRIVFHEI (112 aa)). The Mg(2+) site is built by E8 and D82. Positions 129-552 (DMSKVNAQQA…DFYYPFMDKI (424 aa)) constitute a Topo IA-type catalytic domain. The segment at 163–168 (SAGRVQ) is interaction with DNA. Y297 (O-(5'-phospho-DNA)-tyrosine intermediate) is an active-site residue. 4 C4-type zinc fingers span residues 572 to 598 (CPKC…YPKC), 616 to 642 (CEKC…YPEC), 663 to 689 (CPEC…YPKC), and 702 to 725 (CEKC…CIKC).

This sequence belongs to the type IA topoisomerase family. Monomer. Requires Mg(2+) as cofactor.

The catalysed reaction is ATP-independent breakage of single-stranded DNA, followed by passage and rejoining.. Functionally, releases the supercoiling and torsional tension of DNA, which is introduced during the DNA replication and transcription, by transiently cleaving and rejoining one strand of the DNA duplex. Introduces a single-strand break via transesterification at a target site in duplex DNA. The scissile phosphodiester is attacked by the catalytic tyrosine of the enzyme, resulting in the formation of a DNA-(5'-phosphotyrosyl)-enzyme intermediate and the expulsion of a 3'-OH DNA strand. The free DNA strand then undergoes passage around the unbroken strand, thus removing DNA supercoils. Finally, in the religation step, the DNA 3'-OH attacks the covalent intermediate to expel the active-site tyrosine and restore the DNA phosphodiester backbone. This is DNA topoisomerase 1 from Helicobacter pylori (strain ATCC 700392 / 26695) (Campylobacter pylori).